Here is a 398-residue protein sequence, read N- to C-terminus: Lysophospholipid transporter LplT (398 aa).

The next 11 helical transmembrane spans lie at 19–39 (VIAAQFLSAFGDNALLFATLA), 53–73 (ILQMVFVGAYILFAPFVGQVA), 91–111 (LGAASICFGFNPFVGYTLVGI), 139–159 (LMEASTIAAILLGSVAGGVLA), 164–184 (IAALVACALAYAGAVVANLFI), 227–247 (LFWGAGVTLRFLLVLWVPVAL), 257–277 (YLNAMVAIGIVVGAGAAAKLV), 281–301 (TVARCMPAGILIGVVVLIFSL), 304–324 (ALLPAYALLTLIGVLGGFFVV), 350–370 (GENSAMLLMLGLYSLAVLVGI), and 372–392 (VVAIGIGFGGLFALAIAALWI).

Belongs to the major facilitator superfamily. LplT (TC 2.A.1.42) family.

Its subcellular location is the cell inner membrane. Catalyzes the facilitated diffusion of 2-acyl-glycero-3-phosphoethanolamine (2-acyl-GPE) into the cell. The chain is Lysophospholipid transporter LplT from Citrobacter koseri (strain ATCC BAA-895 / CDC 4225-83 / SGSC4696).